A 942-amino-acid chain; its full sequence is Isoleucine--tRNA ligase (942 aa).

Residues 58-68 (PYANGDIHIGH) carry the 'HIGH' region motif. Glu566 is an L-isoleucyl-5'-AMP binding site. The 'KMSKS' region motif lies at 607-611 (KMSKS). An ATP-binding site is contributed by Lys610. Zn(2+) is bound by residues Cys905, Cys908, Cys925, and Cys928.

The protein belongs to the class-I aminoacyl-tRNA synthetase family. IleS type 1 subfamily. In terms of assembly, monomer. Requires Zn(2+) as cofactor.

The protein localises to the cytoplasm. The catalysed reaction is tRNA(Ile) + L-isoleucine + ATP = L-isoleucyl-tRNA(Ile) + AMP + diphosphate. In terms of biological role, catalyzes the attachment of isoleucine to tRNA(Ile). As IleRS can inadvertently accommodate and process structurally similar amino acids such as valine, to avoid such errors it has two additional distinct tRNA(Ile)-dependent editing activities. One activity is designated as 'pretransfer' editing and involves the hydrolysis of activated Val-AMP. The other activity is designated 'posttransfer' editing and involves deacylation of mischarged Val-tRNA(Ile). The chain is Isoleucine--tRNA ligase from Vibrio parahaemolyticus serotype O3:K6 (strain RIMD 2210633).